Reading from the N-terminus, the 1195-residue chain is Zinc finger and BTB domain-containing protein 38 (1195 aa).

The 68-residue stretch at 33–100 (CDVTIIVEDT…IYSSTVVVKR (68 aa)) folds into the BTB domain. K43 is covalently cross-linked (Glycyl lysine isopeptide (Lys-Gly) (interchain with G-Cter in SUMO2)). A Phosphoserine modification is found at S130. Glycyl lysine isopeptide (Lys-Gly) (interchain with G-Cter in SUMO2) cross-links involve residues K145, K148, K151, and K259. The disordered stretch occupies residues 264–334 (RKPKTFSIPQ…QSSDVPGPPA (71 aa)). Residues 270–280 (SIPQDSDSATE) are compositionally biased toward polar residues. The interval 300-523 (PAAVLTRSKS…RRYQCIFCLE (224 aa)) is interaction with CBFA2T3. The residue at position 309 (S309) is a Phosphoserine. Residues 314-323 (GDVHFSREDE) show a composition bias toward basic and acidic residues. The C2H2-type 1 zinc-finger motif lies at 342–364 (YNCSCCSKAFDSSTLLSAHMQLH). Residues 371–395 (LVCKYCNKQFTTLNRLDRHEQICMR) form a C2H2-type 2; degenerate zinc finger. 3 C2H2-type zinc fingers span residues 460 to 482 (YSCVVCKRSYVTLSSLRRHANVH), 488 to 510 (YPCHYCNKVFALAEYRTRHEIWH), and 516 to 539 (YQCIFCLETFMTYYILKNHQKSFH). Residues K550, K557, K754, K758, K763, K804, K814, K821, K842, K850, and K857 each participate in a glycyl lysine isopeptide (Lys-Gly) (interchain with G-Cter in SUMO2) cross-link. The disordered stretch occupies residues 745–804 (SDPAVSQSLKDDSKPEPDKVGRFASRPKSIKEKKKTTSHTRGEIPEESNYVADPGGSLSK). The span at 753–765 (LKDDSKPEPDKVG) shows a compositional bias: basic and acidic residues. 2 disordered regions span residues 871-891 (QEEPLPQGNDPEPSGDSPLGL) and 903-922 (FDDASDQDSTDKPWRPYYNY). Glycyl lysine isopeptide (Lys-Gly) (interchain with G-Cter in SUMO2) cross-links involve residues K923, K964, K969, K977, K981, K991, K1017, and K1026. 5 consecutive C2H2-type zinc fingers follow at residues 1010 to 1032 (YACELCAKQFQSPSTLKMHMRCH), 1038 to 1060 (YQCKTCGRCFSVQGNLQKHERIH), 1066 to 1088 (FVCQYCNKAFTLNETLKIHERIH), 1094 to 1116 (YHCQFCFQRFLYLSTKRNHEQRH), and 1125 to 1147 (YACFQCPKICKTAAALGMHQKKH). Residues K1109, K1132, K1135, K1150, and K1183 each participate in a glycyl lysine isopeptide (Lys-Gly) (interchain with G-Cter in SUMO2) cross-link.

As to quaternary structure, interacts with CBFA2T3. Interacts with ZBTB4. Interacts with RBBP6. Post-translationally, ubiquitinated by RBBP6; leading to its degradation by the proteasome.

It localises to the nucleus. The protein localises to the chromosome. Transcriptional regulator with bimodal DNA-binding specificity. Binds with a higher affinity to methylated CpG dinucleotides in the consensus sequence 5'-CGCG-3' but can also bind to E-box elements (5'-CACGTG-3'). Can also bind specifically to a single methyl-CpG pair. Represses transcription in a methyl-CpG-dependent manner. Plays an important role in regulating DNA replication and common fragile sites (CFS) stability in a RBBP6- and MCM10-dependent manner; represses expression of MCM10 which plays an important role in DNA-replication. Acts as a transcriptional activator. May be involved in the differentiation and/or survival of late postmitotic neurons. The polypeptide is Zinc finger and BTB domain-containing protein 38 (Homo sapiens (Human)).